The chain runs to 87 residues: Large ribosomal subunit protein bL31B (87 aa).

This sequence belongs to the bacterial ribosomal protein bL31 family. Type B subfamily. Part of the 50S ribosomal subunit.

This is Large ribosomal subunit protein bL31B from Pseudomonas paraeruginosa (strain DSM 24068 / PA7) (Pseudomonas aeruginosa (strain PA7)).